A 436-amino-acid chain; its full sequence is AMSH-like protease (436 aa).

Met-1 bears the N-acetylmethionine mark. Phosphoserine occurs at positions 25 and 242. The MPN domain occupies 269–397; that stretch reads VVLPEDLCHK…IFRLTNAGML (129 aa). Zn(2+) contacts are provided by His-347, His-349, Asp-360, His-362, Cys-402, His-408, and His-410. Residues 347–360 carry the JAMM motif motif; the sequence is HTHPTQTAFLSSVD.

This sequence belongs to the peptidase M67C family. Zn(2+) is required as a cofactor. Ubiquitously expressed.

Inhibited by UbV(SP.1), an ubiquitin variant that also inhibits STAMBP. Zinc metalloprotease that specifically cleaves 'Lys-63'-linked polyubiquitin chains. Acts as a positive regulator of the TORC1 signaling pathway by mediating 'Lys-63'-linked deubiquitination of SESN2, thereby inhibiting SESN2-interaction with the GATOR2 complex. Does not cleave 'Lys-48'-linked polyubiquitin chains. This chain is AMSH-like protease, found in Homo sapiens (Human).